A 125-amino-acid polypeptide reads, in one-letter code: Glycine cleavage system H protein (125 aa).

The Lipoyl-binding domain maps to 23–103 (TALVGITDFA…PYNAWLIKMK (81 aa)). The residue at position 64 (K64) is an N6-lipoyllysine.

This sequence belongs to the GcvH family. In terms of assembly, the glycine cleavage system is composed of four proteins: P, T, L and H. (R)-lipoate serves as cofactor.

Functionally, the glycine cleavage system catalyzes the degradation of glycine. The H protein shuttles the methylamine group of glycine from the P protein to the T protein. This is Glycine cleavage system H protein from Chlorobium chlorochromatii (strain CaD3).